Consider the following 101-residue polypeptide: Citrate lyase acyl carrier protein (101 aa).

Serine 14 carries the post-translational modification O-(phosphoribosyl dephospho-coenzyme A)serine.

Belongs to the CitD family. Oligomer with a subunit composition of (alpha,beta,gamma)6.

Its subcellular location is the cytoplasm. In terms of biological role, covalent carrier of the coenzyme of citrate lyase. The protein is Citrate lyase acyl carrier protein of Latilactobacillus sakei subsp. sakei (strain 23K) (Lactobacillus sakei subsp. sakei).